The chain runs to 231 residues: Probable methylthioribulose-1-phosphate dehydratase (231 aa).

Cys82 provides a ligand contact to substrate. Zn(2+)-binding residues include His100 and His102. Glu123 (proton donor/acceptor) is an active-site residue. Residue His181 participates in Zn(2+) binding.

It belongs to the aldolase class II family. MtnB subfamily. Zn(2+) serves as cofactor.

Its subcellular location is the cytoplasm. The enzyme catalyses 5-(methylsulfanyl)-D-ribulose 1-phosphate = 5-methylsulfanyl-2,3-dioxopentyl phosphate + H2O. The protein operates within amino-acid biosynthesis; L-methionine biosynthesis via salvage pathway; L-methionine from S-methyl-5-thio-alpha-D-ribose 1-phosphate: step 2/6. Catalyzes the dehydration of methylthioribulose-1-phosphate (MTRu-1-P) into 2,3-diketo-5-methylthiopentyl-1-phosphate (DK-MTP-1-P). This is Probable methylthioribulose-1-phosphate dehydratase from Dictyostelium discoideum (Social amoeba).